The chain runs to 531 residues: Cytosolic Fe-S cluster assembly factor NAR1 (531 aa).

[4Fe-4S] cluster contacts are provided by Cys-20, Cys-72, Cys-75, Cys-78, Cys-184, and Cys-239. The interval 395-426 is disordered; that stretch reads TSSTTTTKTNPLVARRKARLSSKRSESGAQDV. [4Fe-4S] cluster is bound by residues Cys-442 and Cys-446.

This sequence belongs to the NARF family.

Functionally, component of the cytosolic Fe/S protein assembly machinery. Required for maturation of extramitochondrial Fe/S proteins. May play a role in the transfer of pre-assembled Fe/S clusters to target apoproteins. This chain is Cytosolic Fe-S cluster assembly factor NAR1 (NAR1), found in Meyerozyma guilliermondii (strain ATCC 6260 / CBS 566 / DSM 6381 / JCM 1539 / NBRC 10279 / NRRL Y-324) (Yeast).